We begin with the raw amino-acid sequence, 123 residues long: MAMNMSMTLCMFVMVVVAATVIDSTQLQEPDLSRMRRSGPADCCRMKECCTDRVNECLQRYSGREDKFVSFCYQEATVTCGSFNEIVGCCYGYQMCMIRVVKPNSLSGAHEACKTVSCGNPCA.

The N-terminal stretch at 1–18 is a signal peptide; that stretch reads MAMNMSMTLCMFVMVVVA. The propeptide occupies 19 to 37; it reads ATVIDSTQLQEPDLSRMRR. Intrachain disulfides connect Cys-49-Cys-80, Cys-50-Cys-89, Cys-57-Cys-72, Cys-90-Cys-118, and Cys-96-Cys-113.

Homodimer; disulfide-linked. Expressed by the venom duct.

It is found in the secreted. Potently and selectively blocks the desensitization of ionotropic glutamate AMPA receptors (GRIA1, GRIA2, GRIA3 and GRIA4). Binds to a different site than does the drug cyclothiazide. The toxin acts like a straitjacket on the 'gating ring' of the ligand-binding domain (LBD) of the receptor. It does so by restraining the domains via both intra- and interdimer cross-links such that agonist-induced closure of the LBD 'clamshells' is transduced into an irislike expansion of the gating ring. Compared to other desensitization blockers, it is a poor stabilizer of the open channel because toxin-bound AMPA receptors undergo frequent brief closures. In vitro, application of the toxin to hippocampal slices causes a large and rapid increase in resting AMPA receptor-mediated current leading to neuronal death. This is Con-ikot-ikot from Conus striatus (Striated cone).